We begin with the raw amino-acid sequence, 1374 residues long: DNA-directed RNA polymerase subunit beta (1374 aa).

This sequence belongs to the RNA polymerase beta chain family. The RNAP catalytic core consists of 2 alpha, 1 beta, 1 beta' and 1 omega subunit. When a sigma factor is associated with the core the holoenzyme is formed, which can initiate transcription.

The enzyme catalyses RNA(n) + a ribonucleoside 5'-triphosphate = RNA(n+1) + diphosphate. In terms of biological role, DNA-dependent RNA polymerase catalyzes the transcription of DNA into RNA using the four ribonucleoside triphosphates as substrates. This chain is DNA-directed RNA polymerase subunit beta, found in Methylobacterium radiotolerans (strain ATCC 27329 / DSM 1819 / JCM 2831 / NBRC 15690 / NCIMB 10815 / 0-1).